Reading from the N-terminus, the 572-residue chain is DnaJ protein ERDJ3A (572 aa).

Positions 1–23 (MVRTRLAISVVLVSTLLLLNVKA) are cleaved as a signal peptide. Residues 27 to 91 (DPYKVLGVSK…EKRKNYDLYG (65 aa)) form the J domain. The stretch at 394–423 (ITVKNLKSAVQELGKLLEGLEKKNKKVSSK) forms a coiled coil. Positions 419 to 439 (KVSSKSQAGQAPNESSEKIPL) are disordered. Over residues 422-432 (SKSQAGQAPNE) the composition is skewed to polar residues. Residue asparagine 431 is glycosylated (N-linked (GlcNAc...) asparagine).

As to quaternary structure, interacts with BIP1 and BIP3. The interaction with BIP1 and BIP3 activates the ATPase enzyme activities of BIP1 and BIP3. In terms of processing, not N-glycosylated. As to expression, expressed in roots, leaves, stems, flowers, mature pollen grains and growing pollen tubes.

Its subcellular location is the endoplasmic reticulum lumen. In terms of biological role, regulates protein folding in the endoplasmic reticulum (ER) lumen. Functions probably as a co-molecular chaperone that is required for normal growth of pollen tubes under high-temperature stress. This is DnaJ protein ERDJ3A (ERDJ3A) from Arabidopsis thaliana (Mouse-ear cress).